Consider the following 91-residue polypeptide: Protein RacC (91 aa).

In Escherichia coli (strain K12), this protein is Protein RacC (racC).